Here is a 289-residue protein sequence, read N- to C-terminus: Acetyl-coenzyme A carboxylase carboxyl transferase subunit beta (289 aa).

In terms of domain architecture, CoA carboxyltransferase N-terminal spans 28-289; that stretch reads VMTKCPKCKK…QGGEMAVWQS (262 aa). The Zn(2+) site is built by cysteine 32, cysteine 35, cysteine 51, and cysteine 54. A C4-type zinc finger spans residues 32–54; that stretch reads CPKCKKIMYTKEVLKNLKVCVNC.

This sequence belongs to the AccD/PCCB family. As to quaternary structure, acetyl-CoA carboxylase is a heterohexamer composed of biotin carboxyl carrier protein (AccB), biotin carboxylase (AccC) and two subunits each of ACCase subunit alpha (AccA) and ACCase subunit beta (AccD). Zn(2+) serves as cofactor.

Its subcellular location is the cytoplasm. The catalysed reaction is N(6)-carboxybiotinyl-L-lysyl-[protein] + acetyl-CoA = N(6)-biotinyl-L-lysyl-[protein] + malonyl-CoA. The protein operates within lipid metabolism; malonyl-CoA biosynthesis; malonyl-CoA from acetyl-CoA: step 1/1. Component of the acetyl coenzyme A carboxylase (ACC) complex. Biotin carboxylase (BC) catalyzes the carboxylation of biotin on its carrier protein (BCCP) and then the CO(2) group is transferred by the transcarboxylase to acetyl-CoA to form malonyl-CoA. The chain is Acetyl-coenzyme A carboxylase carboxyl transferase subunit beta from Bacillus thuringiensis (strain Al Hakam).